A 167-amino-acid chain; its full sequence is Cytochrome b6-f complex subunit 4 (167 aa).

3 helical membrane-spanning segments follow: residues 36–56, 95–115, and 131–151; these read LLYI…GLAV, LLGV…PFLE, and TVFL…TLPI.

Belongs to the cytochrome b family. PetD subfamily. In terms of assembly, the 4 large subunits of the cytochrome b6-f complex are cytochrome b6, subunit IV (17 kDa polypeptide, petD), cytochrome f and the Rieske protein, while the 4 small subunits are petG, petL, petM and petN. The complex functions as a dimer.

It is found in the plastid. The protein resides in the chloroplast thylakoid membrane. In terms of biological role, component of the cytochrome b6-f complex, which mediates electron transfer between photosystem II (PSII) and photosystem I (PSI), cyclic electron flow around PSI, and state transitions. The polypeptide is Cytochrome b6-f complex subunit 4 (Calycanthus floridus var. glaucus (Eastern sweetshrub)).